Here is a 566-residue protein sequence, read N- to C-terminus: Urease subunit alpha (566 aa).

Residues 128 to 566 (GGIDSHVHFI…LPMAQRYFLF (439 aa)) form the Urease domain. Positions 133, 135, and 216 each coordinate Ni(2+). Position 216 is an N6-carboxylysine (Lys-216). His-218 contributes to the substrate binding site. The Ni(2+) site is built by His-245 and His-271. Catalysis depends on His-319, which acts as the Proton donor. Asp-359 is a binding site for Ni(2+).

Belongs to the metallo-dependent hydrolases superfamily. Urease alpha subunit family. Heterotrimer of UreA (gamma), UreB (beta) and UreC (alpha) subunits. Three heterotrimers associate to form the active enzyme. Requires Ni cation as cofactor. Carboxylation allows a single lysine to coordinate two nickel ions.

Its subcellular location is the cytoplasm. It carries out the reaction urea + 2 H2O + H(+) = hydrogencarbonate + 2 NH4(+). It participates in nitrogen metabolism; urea degradation; CO(2) and NH(3) from urea (urease route): step 1/1. The polypeptide is Urease subunit alpha (Nitrosococcus oceani (strain ATCC 19707 / BCRC 17464 / JCM 30415 / NCIMB 11848 / C-107)).